Consider the following 578-residue polypeptide: Proline--tRNA ligase (578 aa).

It belongs to the class-II aminoacyl-tRNA synthetase family. ProS type 1 subfamily. As to quaternary structure, homodimer.

Its subcellular location is the cytoplasm. It catalyses the reaction tRNA(Pro) + L-proline + ATP = L-prolyl-tRNA(Pro) + AMP + diphosphate. Catalyzes the attachment of proline to tRNA(Pro) in a two-step reaction: proline is first activated by ATP to form Pro-AMP and then transferred to the acceptor end of tRNA(Pro). As ProRS can inadvertently accommodate and process non-cognate amino acids such as alanine and cysteine, to avoid such errors it has two additional distinct editing activities against alanine. One activity is designated as 'pretransfer' editing and involves the tRNA(Pro)-independent hydrolysis of activated Ala-AMP. The other activity is designated 'posttransfer' editing and involves deacylation of mischarged Ala-tRNA(Pro). The misacylated Cys-tRNA(Pro) is not edited by ProRS. In Burkholderia pseudomallei (strain K96243), this protein is Proline--tRNA ligase.